Consider the following 852-residue polypeptide: Protein SEY1 (852 aa).

The Cytoplasmic segment spans residues 1–738; that stretch reads MNGHFAAVGN…KRSAIGGITQ (738 aa). Positions 47 to 283 constitute a GB1/RHD3-type G domain; the sequence is GFNYHLISVF…FVGGVFLPEY (237 aa). Position 57 to 64 (57 to 64) interacts with GTP; the sequence is GSQSTGKS. A coiled-coil region spans residues 475–500; it reads QYRLFEKELDEVSARLRKEEMRRLAI. Residues 739-759 form a helical membrane-spanning segment; the sequence is VPLYFYIVLLIFGWNEIVMVL. Residues 760–762 are Lumenal-facing; sequence RNP. A helical transmembrane segment spans residues 763-783; sequence MLFMLLLVMGGGTYVAYTLNL. Residues 784-852 lie on the Cytoplasmic side of the membrane; it reads LGPMMQMANA…AQEVEEDDDI (69 aa). Positions 825–852 are disordered; the sequence is RSQDNGIGMDRLDSRGKKAQEVEEDDDI. The span at 834 to 845 shows a compositional bias: basic and acidic residues; that stretch reads DRLDSRGKKAQE.

It belongs to the TRAFAC class dynamin-like GTPase superfamily. GB1/RHD3 GTPase family. RHD3 subfamily.

It localises to the endoplasmic reticulum membrane. Functionally, cooperates with the reticulon proteins and tubule-shaping DP1 family proteins to generate and maintain the structure of the tubular endoplasmic reticulum network. Has GTPase activity, which is required for its function in ER organization. In Chaetomium globosum (strain ATCC 6205 / CBS 148.51 / DSM 1962 / NBRC 6347 / NRRL 1970) (Soil fungus), this protein is Protein SEY1.